The following is a 64-amino-acid chain: Carnocyclin-A (64 aa).

Residues 1–4 constitute a propeptide that is removed on maturation; it reads MLYE. Positions 5-64 form a cross-link, cyclopeptide (Leu-Leu); it reads LVAYGIAQGTAEKVVSLINAGLTVGSIISILGGVTVGLSGVFTAVKAAIAKQGIKKAIQL.

It is found in the secreted. In terms of biological role, cyclopeptide antibiotic that inhibits the growth of Gram-positive bacteria, but has no effect on the growth of Gram-negative bacteria. The protein is Carnocyclin-A of Carnobacterium maltaromaticum (Carnobacterium piscicola).